We begin with the raw amino-acid sequence, 86 residues long: Sulmotoxin 2 (86 aa).

A signal peptide spans 1–21; sequence MKTLLLALAVVAFMCLDSVYP. Cystine bridges form between C24–C47, C27–C35, C41–C62, C66–C77, and C78–C83.

Belongs to the three-finger toxin family. Ancestral subfamily. Boigatoxin sub-subfamily. As to quaternary structure, monomer. Expressed by the venom gland.

It localises to the secreted. Functionally, probable neurotoxin. Is not toxic to mice and geckos. This Spilotes sulphureus (Amazon puffing snake) protein is Sulmotoxin 2.